The sequence spans 123 residues: Small ribosomal subunit protein uS12c (123 aa).

The protein belongs to the universal ribosomal protein uS12 family. Part of the 30S ribosomal subunit.

It is found in the plastid. The protein resides in the chloroplast. Its function is as follows. With S4 and S5 plays an important role in translational accuracy. Located at the interface of the 30S and 50S subunits. This is Small ribosomal subunit protein uS12c (rps12) from Physcomitrium patens (Spreading-leaved earth moss).